A 194-amino-acid polypeptide reads, in one-letter code: 7-methyl-GTP pyrophosphatase (194 aa).

Catalysis depends on Asp-69, which acts as the Proton acceptor.

This sequence belongs to the Maf family. YceF subfamily. The cofactor is a divalent metal cation.

The protein resides in the cytoplasm. The enzyme catalyses N(7)-methyl-GTP + H2O = N(7)-methyl-GMP + diphosphate + H(+). Its function is as follows. Nucleoside triphosphate pyrophosphatase that hydrolyzes 7-methyl-GTP (m(7)GTP). May have a dual role in cell division arrest and in preventing the incorporation of modified nucleotides into cellular nucleic acids. The protein is 7-methyl-GTP pyrophosphatase of Sodalis glossinidius (strain morsitans).